Here is a 78-residue protein sequence, read N- to C-terminus: Protein Vpr (78 aa).

The tract at residues 1–42 (MEQAPEDQGPQREPHNEWTLELLEELKNEAVRHFPRIWLHGL) is homooligomerization.

This sequence belongs to the HIV-1 VPR protein family. In terms of assembly, homooligomer, may form homodimer. Interacts with p6-gag region of the Pr55 Gag precursor protein through a (Leu-X-X)4 motif near the C-terminus of the P6gag protein. Interacts with host UNG. May interact with host RAD23A/HHR23A. Interacts with host VPRBP/DCAF1, leading to hijack the CUL4A-RBX1-DDB1-DCAF1/VPRBP complex, mediating ubiquitination of host proteins such as TERT and ZGPAT and arrest of the cell cycle in G2 phase. Post-translationally, phosphorylated on several residues by host. These phosphorylations regulate VPR activity for the nuclear import of the HIV-1 pre-integration complex.

It is found in the virion. Its subcellular location is the host nucleus. It localises to the host extracellular space. In terms of biological role, during virus replication, may deplete host UNG protein, and incude G2-M cell cycle arrest. Acts by targeting specific host proteins for degradation by the 26S proteasome, through association with the cellular CUL4A-DDB1 E3 ligase complex by direct interaction with host VPRPB/DCAF-1. Cell cycle arrest reportedly occurs within hours of infection and is not blocked by antiviral agents, suggesting that it is initiated by the VPR carried into the virion. Additionally, VPR induces apoptosis in a cell cycle dependent manner suggesting that these two effects are mechanistically linked. Detected in the serum and cerebrospinal fluid of AIDS patient, VPR may also induce cell death to bystander cells. During virus entry, plays a role in the transport of the viral pre-integration (PIC) complex to the host nucleus. This function is crucial for viral infection of non-dividing macrophages. May act directly at the nuclear pore complex, by binding nucleoporins phenylalanine-glycine (FG)-repeat regions. This Human immunodeficiency virus type 1 group M subtype B (isolate PCV12) (HIV-1) protein is Protein Vpr.